A 392-amino-acid polypeptide reads, in one-letter code: MEDMMKQILEKLNTIEKNISETNIRIEKIEKEQELKRKVELYGKEPEKKLHKENIEKLSSSIEDKIIQNIDKKLKKIENVEEQYQWKNIVKINKPLSVGEKYMENFKKILVYLGEKHPKLEELYSLTDYNKLVADIYTDRNLVISAYNYGLLQVLYIEHPSQLELFDENIKLAYMKFRNVTKAQLIYMRIYSAMAEPYDKGVIPKIEIIKFGITYSKLKYDEVYEHQPIEKLDLKKFISQKRALGILVIQKEIENLNGNVWLYSNLDGRLILSNHNKAENVEVKNILSDWSKKLSIPEGNYPRCSIKNPMFTGKTMEVLCELSKKQINMRHICNLCSKMKNVQIQDPILPEYEEEYVEIEKEEPGEEKNLEDVSTDDNNEKKKIRSVIVKET.

Residues 1–88 (MEDMMKQILE…NVEEQYQWKN (88 aa)) are a coiled coil. The tract at residues 358 to 392 (EIEKEEPGEEKNLEDVSTDDNNEKKKIRSVIVKET) is disordered.

The protein belongs to the caulimoviridae viroplasmin family.

It is found in the host cytoplasm. Functionally, enhances the translation of downstream ORFs on polycistronic mRNAs derived from cassava vein mosaic virus. This chain is Putative transactivator/viroplasmin protein, found in Cassava vein mosaic virus (CsVMV).